The primary structure comprises 483 residues: Type 2 glycosyltransferase (483 aa).

Residues 21-41 form a helical membrane-spanning segment; it reads AVVYLSALFTPWFTAFCVLWL. The Dxd motif motif lies at 156 to 158; it reads DDD. The short motif at 301-305 is the QxxxRW motif element; sequence QCSRW. Asparagine 313 carries an N-linked (GlcNAc...) asparagine glycan. Transmembrane regions (helical) follow at residues 336-356, 369-389, and 396-416; these read IATF…ALWW, AIYA…VGLF, and IMFL…KIYA. N-linked (GlcNAc...) asparagine glycosylation is present at asparagine 421.

It belongs to the GT2 glycosyltransferase family.

It is found in the cell membrane. In terms of biological role, glycosyltransferase that plays an important role in infection-related morphogenesis and pathogenesis. Involved in stress tolerance and hyphal hydrophobicity via its regulation of the expression of nydrophobin MPG1. May regulate growth, pathogenicity, and cell wall integrity (CWI) through glycosylation of heat shock protein SSB1, and other (unidentified) substrates may contribute to conidiation. Candidate proteins as potential substrates of GT2 include several heat shock proteins (SSB1/MGG_02503, MGG_06759 and MGG_06958), two coiled-coil domain-containing proteins (MGG_04321 and MGG_09571), aminopeptidase 2 (MGG_16472), and a nuclease domain-containing protein (MGG_12646). In Pyricularia oryzae (strain 70-15 / ATCC MYA-4617 / FGSC 8958) (Rice blast fungus), this protein is Type 2 glycosyltransferase.